Reading from the N-terminus, the 1146-residue chain is MGWGTGPPSWSELERVLSGRPGRTDPEAMYPGDGGDSPAWSRKREPYLAEPIRPVDRPTVPYAELHAHSAYSFLDGASQPEELVEEAVRLGLEAIALTDHDGFYGTVRFAEAAKEWGIATVFGAELSLGVARPAPRRSARKAARGRGRAVRYAATPEFEHAAAPDSAPRTGEPDPPGPHLLVLARGQEGYRRLSREIAAAHLAAGEKGVLRYDIDALTAAAGGHWHILTGCRKGHLRTALADDLAAGETGLPRAEAALRDLVERFGADRVSVELTHHGVPADDERNALLIALADRVGLPVLATTGAHFAGPEQRRRAMALAAIRARRSLDEMAGWLAPAGGAHLRSGAEMARLFAACPDAVANAVALSRECAFDLRLIAPQLPPFAVPDGHDENSWLRELVLRGAARRYGPPHANPPAYRQLEHELEVIATLGFPGYFLVVHDIVSFCERNGILCQGRGSAANSAVCFAIGITNVDPVANELLFERFLSPERDGPPDIDIDIESDRREEAIQHVYARYGREYAAQVANVITYRGKSAVRDAAKALGFSPGQQDAWSKQVSRWTGVGAETGTDIPEQVLRLAADLEGLPRHMGIHSGGMVICDRPIADVCPVEWARMAGRSVLQWDKDDCAAVGLVKFDMLGLGMLSALHYMIDLVREHEGVEVRLHELDLKEPAVYEMLSRADSVGVFQVESRAQMATLPRLRPREFYDLVVEVALIRPGPIQGGSVHPYIRRRNGTEPVTYDHPALENSLGRTLGVPLFQEQLMQMAVDVAGFTAAEADQLRRAMGSKRSPERMRRLKERLYRGMAELHGITGEVADRIYEKLYAFANFGFPESHSQSFAALVFYSAWFKLHHPAAFCAGLLRAQPMGFYSPQSLVADARRHGVPVHGPDVNASLAEATLENGGREVRLGLAGVRHIGSELAERIVAARVEHGPYTSVLDLTGRVELTVAQAEALATAGAFDSVTGPSGAERSGGRRAALWAAGAAARERAHLLPGTGPAADAPALPGMSALELAAADVWATGISPGSYPTEFLRARMDELGVIPAGRLLEVRDGSRVLVGGAVTHRQRPATAAGVTFLNLEDETGMVNVVCSVGLWTRYRALAQSASALLVRGRVQNAEGAVSVVAEHLQLLSLGMGSRSRDFR.

Disordered regions lie at residues 1 to 43 and 154 to 178; these read MGWG…WSRK and ATPEFEHAAAPDSAPRTGEPDPPGP. Over residues 12–26 the composition is skewed to basic and acidic residues; sequence ELERVLSGRPGRTDP.

The protein belongs to the DNA polymerase type-C family. DnaE2 subfamily.

It is found in the cytoplasm. It carries out the reaction DNA(n) + a 2'-deoxyribonucleoside 5'-triphosphate = DNA(n+1) + diphosphate. Functionally, DNA polymerase involved in damage-induced mutagenesis and translesion synthesis (TLS). It is not the major replicative DNA polymerase. The chain is Error-prone DNA polymerase from Nocardia farcinica (strain IFM 10152).